The following is a 430-amino-acid chain: Transcobalamin-2 (430 aa).

Positions 1–18 (MELLKALLLLSGVFGALA) are cleaved as a signal peptide. Intrachain disulfides connect Cys-21–Cys-270, Cys-116–Cys-312, and Cys-165–Cys-208. Cob(II)alamin contacts are provided by residues 152-156 (TNYYQ), His-193, 193-197 (HVSVD), Asn-245, Ser-248, Gln-294, and 398-400 (WQL).

It belongs to the eukaryotic cobalamin transport proteins family. In terms of assembly, interacts with CD320 (via LDL-receptor class A domains).

It is found in the secreted. In terms of biological role, primary vitamin B12-binding and transport protein. Delivers cobalamin to cells. This Mus musculus (Mouse) protein is Transcobalamin-2 (Tcn2).